Reading from the N-terminus, the 62-residue chain is Conotoxin Lt5.8 (62 aa).

The N-terminal stretch at M1–T19 is a signal peptide. The propeptide occupies M20–S47. Q50 carries the post-translational modification Pyrrolidone carboxylic acid. Position 61 is a glutamine amide (Q61).

The protein belongs to the conotoxin T superfamily. Post-translationally, contains 2 disulfide bonds that can be either 'C1-C3, C2-C4' or 'C1-C4, C2-C3', since these disulfide connectivities have been observed for conotoxins with cysteine framework V (for examples, see AC P0DQQ7 and AC P81755). Expressed by the venom duct.

The protein resides in the secreted. This Conus litteratus (Lettered cone) protein is Conotoxin Lt5.8.